We begin with the raw amino-acid sequence, 422 residues long: 5-methylthioadenosine/S-adenosylhomocysteine deaminase 1 (422 aa).

Zn(2+) is bound by residues His56 and His58. Substrate contacts are provided by Glu85 and His174. His201 contributes to the Zn(2+) binding site. Residues Glu204 and Asp290 each contribute to the substrate site. Zn(2+) is bound at residue Asp290.

It belongs to the metallo-dependent hydrolases superfamily. MTA/SAH deaminase family. Zn(2+) is required as a cofactor.

The enzyme catalyses S-adenosyl-L-homocysteine + H2O + H(+) = S-inosyl-L-homocysteine + NH4(+). The catalysed reaction is S-methyl-5'-thioadenosine + H2O + H(+) = S-methyl-5'-thioinosine + NH4(+). Its function is as follows. Catalyzes the deamination of 5-methylthioadenosine and S-adenosyl-L-homocysteine into 5-methylthioinosine and S-inosyl-L-homocysteine, respectively. Is also able to deaminate adenosine. This Archaeoglobus fulgidus (strain ATCC 49558 / DSM 4304 / JCM 9628 / NBRC 100126 / VC-16) protein is 5-methylthioadenosine/S-adenosylhomocysteine deaminase 1.